Here is a 361-residue protein sequence, read N- to C-terminus: Peptide chain release factor 1 (361 aa).

Glutamine 236 is subject to N5-methylglutamine.

The protein belongs to the prokaryotic/mitochondrial release factor family. In terms of processing, methylated by PrmC. Methylation increases the termination efficiency of RF1.

The protein resides in the cytoplasm. Its function is as follows. Peptide chain release factor 1 directs the termination of translation in response to the peptide chain termination codons UAG and UAA. The chain is Peptide chain release factor 1 from Lactobacillus acidophilus (strain ATCC 700396 / NCK56 / N2 / NCFM).